Reading from the N-terminus, the 339-residue chain is Putative P2Y purinoceptor 10 (339 aa).

Topologically, residues 1–39 are extracellular; it reads MANLDKYTETFKMGSNSTSTAEIYCNVTNVKFQYSLYAT. Asn16 and Asn26 each carry an N-linked (GlcNAc...) asparagine glycan. The helical transmembrane segment at 40–60 threads the bilayer; the sequence is TYILIFIPGLLANSAALWVLC. Topologically, residues 61-68 are cytoplasmic; sequence RFISKKNK. A helical membrane pass occupies residues 69 to 89; sequence AIIFMINLSVADLAHVLSLPL. Topologically, residues 90–103 are extracellular; that stretch reads RIYYYISHHWPFQR. The chain crosses the membrane as a helical span at residues 104 to 124; that stretch reads ALCLLCFYLKYLNMYASICFL. Cys106 and Cys181 are joined by a disulfide. The Cytoplasmic portion of the chain corresponds to 125–149; the sequence is TCISLQRCFFLLKPFRARDWKRRYD. A helical membrane pass occupies residues 150–170; it reads VGISAAIWIVVGTACLPFPIL. Topologically, residues 171–193 are extracellular; sequence RSTDLNNNKSCFADLGYKQMNAV. Asn178 carries N-linked (GlcNAc...) asparagine glycosylation. Residues 194–214 form a helical membrane-spanning segment; sequence ALVGMITVAELAGFVIPVIII. Residues 215–244 are Cytoplasmic-facing; sequence AWCTWKTTISLRQPPMAFQGISERQKALRM. The helical transmembrane segment at 245-265 threads the bilayer; the sequence is VFMCAAVFFICFTPYHINFIF. Residues 266 to 288 are Extracellular-facing; it reads YTMVKETIISSCPVVRIALYFHP. Residues 289–309 traverse the membrane as a helical segment; that stretch reads FCLCLASLCCLLDPILYYFMA. The Cytoplasmic portion of the chain corresponds to 310–339; that stretch reads SEFRDQLSRHGSSVTRSRLMSKESGSSMIG.

Belongs to the G-protein coupled receptor 1 family. As to expression, weakly expressed in blood leukocytes.

The protein resides in the cell membrane. Functionally, putative receptor for purines coupled to G-proteins. In Homo sapiens (Human), this protein is Putative P2Y purinoceptor 10 (P2RY10).